Consider the following 456-residue polypeptide: Chromosomal replication initiator protein DnaA (456 aa).

The domain I, interacts with DnaA modulators stretch occupies residues 1 to 83; sequence MKLKILHFTS…DAFEEESNNG (83 aa). Residues 83-116 are domain II; it reads GVRPEIHIKVKEKKENVKSLKNNKSMLYFNTNGL. The tract at residues 117–331 is domain III, AAA+ region; it reads SLNPFYTFEN…GILSTINAHI (215 aa). 4 residues coordinate ATP: Gly161, Gly163, Lys164, and Thr165. Residues 332-456 form a domain IV, binds dsDNA region; that stretch reads NLSPESSSLK…SKIQQSLDSV (125 aa).

Belongs to the DnaA family. As to quaternary structure, oligomerizes as a right-handed, spiral filament on DNA at oriC.

The protein resides in the cytoplasm. Plays an essential role in the initiation and regulation of chromosomal replication. ATP-DnaA binds to the origin of replication (oriC) to initiate formation of the DNA replication initiation complex once per cell cycle. Binds the DnaA box (a 9 base pair repeat at the origin) and separates the double-stranded (ds)DNA. Forms a right-handed helical filament on oriC DNA; dsDNA binds to the exterior of the filament while single-stranded (ss)DNA is stabiized in the filament's interior. The ATP-DnaA-oriC complex binds and stabilizes one strand of the AT-rich DNA unwinding element (DUE), permitting loading of DNA polymerase. After initiation quickly degrades to an ADP-DnaA complex that is not apt for DNA replication. Binds acidic phospholipids. The protein is Chromosomal replication initiator protein DnaA of Helicobacter hepaticus (strain ATCC 51449 / 3B1).